Reading from the N-terminus, the 125-residue chain is E4-ORF1 (125 aa).

The PDZ-binding signature appears at 122-125 (ATLV).

Belongs to the dUTPase family. Binds to human MPDZ.

It is found in the host cytoplasm. The catalysed reaction is dUTP + H2O = dUMP + diphosphate + H(+). Plays a key role in virus oncogenecity in animals. Binds and sequesters human MUPP1/MPDZ protein in the cytoplasm, preventing it from playing a role in cellular proliferation regulation. Induces cell transformation, probably by inactivating MPDZ protein. The chain is E4-ORF1 (E4) from Homo sapiens (Human).